Consider the following 574-residue polypeptide: G protein-coupled receptor kinase 4 (574 aa).

Residue M1 is modified to N-acetylmethionine. The interval 1–153 (MELENFVANN…ECAGIVCKYL (153 aa)) is N-terminal. In terms of domain architecture, RGS spans 51-171 (DFSSLCDKQP…QESTYFNRFL (121 aa)). Residues 186-448 (FRQYRVLGKG…VSAVKQHPIF (263 aa)) form the Protein kinase domain. ATP is bound by residues 192–200 (LGKGGFGEV) and K215. D311 acts as the Proton acceptor in catalysis. The AGC-kinase C-terminal domain maps to 449–514 (KDINFSRLEA…GSVTIPWQNE (66 aa)). A Phosphoserine modification is found at S484.

The protein belongs to the protein kinase superfamily. AGC Ser/Thr protein kinase family. GPRK subfamily. As to quaternary structure, interacts with DRD3. Post-translationally, palmitoylated.

Its subcellular location is the cytoplasm. It is found in the cell cortex. It carries out the reaction [G-protein-coupled receptor] + ATP = [G-protein-coupled receptor]-phosphate + ADP + H(+). Its activity is regulated as follows. Inhibited by heparin. Its function is as follows. Specifically phosphorylates the activated forms of G protein-coupled receptors. The chain is G protein-coupled receptor kinase 4 (Grk4) from Mus musculus (Mouse).